The chain runs to 233 residues: DnaA regulatory inactivator Hda (233 aa).

It belongs to the DnaA family. HdA subfamily. In terms of assembly, the active form seems to be an ADP-bound monomer. Forms the RIDA complex (regulatory inactivation of DnaA) of ATP-DnaA, ADP-Hda and the DNA-loaded beta sliding clamp (dnaN).

In terms of biological role, mediates the interaction of DNA replication initiator protein DnaA with DNA polymerase subunit beta sliding clamp (dnaN). Stimulates hydrolysis of ATP-DnaA to ADP-DnaA, rendering DnaA inactive for reinitiation, a process called regulatory inhibition of DnaA or RIDA. The sequence is that of DnaA regulatory inactivator Hda from Photorhabdus laumondii subsp. laumondii (strain DSM 15139 / CIP 105565 / TT01) (Photorhabdus luminescens subsp. laumondii).